Here is a 333-residue protein sequence, read N- to C-terminus: Adenosine deaminase (333 aa).

Histidine 12 and histidine 14 together coordinate Zn(2+). Residues histidine 14, aspartate 16, and glycine 170 each coordinate substrate. Histidine 197 serves as a coordination point for Zn(2+). The active-site Proton donor is glutamate 200. Position 278 (aspartate 278) interacts with Zn(2+). Aspartate 279 lines the substrate pocket.

Belongs to the metallo-dependent hydrolases superfamily. Adenosine and AMP deaminases family. Adenosine deaminase subfamily. Zn(2+) serves as cofactor.

The enzyme catalyses adenosine + H2O + H(+) = inosine + NH4(+). It catalyses the reaction 2'-deoxyadenosine + H2O + H(+) = 2'-deoxyinosine + NH4(+). Catalyzes the hydrolytic deamination of adenosine and 2-deoxyadenosine. This chain is Adenosine deaminase, found in Escherichia coli O157:H7.